The chain runs to 517 residues: Dermokine (517 aa).

A signal peptide spans 1–21 (MKLQGSLACLLLALCLGGGAA). Disordered stretches follow at residues 51–83 (VGQG…MGSR) and 123–364 (AGSW…IQKE). 2 stretches are compositionally biased toward gly residues: residues 127–145 (GTSG…GVQG) and 167–176 (GSVGQGGNGG). The span at 197-206 (RGNNQNSGCT) shows a compositional bias: polar residues. Residues 212-235 (GSHESFSNSGGSSNDGSRGSQGSH) show a composition bias toward low complexity. The span at 236-250 (GSNGQGSSGRGGGQG) shows a compositional bias: gly residues. A compositionally biased stretch (low complexity) spans 251–289 (NSDNNGSSSSSSGSNSGNSNSGNSGNSNSGNSGNSGSGS). Gly residues-rich tracts occupy residues 308-332 (GSRG…GGGN) and 347-358 (GGSGSQGHGSNG).

It belongs to the dermokine family. In terms of assembly, homooligomer. Seems to be able to homodimerize and homotrimerize. O-glycosylated. Highly expressed in stratified epithelia; such as the skin, tongue, esophagus, forestomach and vagina. Also found in lung, trachea and urinary bladder.

Its subcellular location is the secreted. In terms of biological role, may act as a soluble regulator of keratinocyte differentiation. This chain is Dermokine (Dmkn), found in Mus musculus (Mouse).